The chain runs to 79 residues: Sec-independent protein translocase protein TatA (79 aa).

Residues 1–21 traverse the membrane as a helical segment; sequence MGSFSIWHWLIVLAIVVLVFG. Positions 43–79 are disordered; the sequence is VKDGSTSTDTPAAAPGQVAGQTAADKTTIDVEAKQKG. The segment covering 69-79 has biased composition (basic and acidic residues); sequence TTIDVEAKQKG.

It belongs to the TatA/E family. In terms of assembly, the Tat system comprises two distinct complexes: a TatABC complex, containing multiple copies of TatA, TatB and TatC subunits, and a separate TatA complex, containing only TatA subunits. Substrates initially bind to the TatABC complex, which probably triggers association of the separate TatA complex to form the active translocon.

It is found in the cell inner membrane. In terms of biological role, part of the twin-arginine translocation (Tat) system that transports large folded proteins containing a characteristic twin-arginine motif in their signal peptide across membranes. TatA could form the protein-conducting channel of the Tat system. This chain is Sec-independent protein translocase protein TatA, found in Delftia acidovorans (strain DSM 14801 / SPH-1).